The chain runs to 851 residues: Probable alpha,alpha-trehalose-phosphate synthase [UDP-forming] 7 (851 aa).

The residue at position 5 (Ser5) is a Phosphoserine. Phosphothreonine is present on Thr32. Residues 59–540 are glycosyltransferase; the sequence is DRMIIVANRL…SRSFLQDLER (482 aa).

This sequence in the N-terminal section; belongs to the glycosyltransferase 20 family. The protein in the C-terminal section; belongs to the trehalose phosphatase family. In terms of assembly, binds to the phosphopeptide-binding site of GRF/14-3-3. Phosphorylated. In terms of tissue distribution, expressed in seedlings, leaves, roots, stems, flowers and siliques.

The catalysed reaction is D-glucose 6-phosphate + UDP-alpha-D-glucose = alpha,alpha-trehalose 6-phosphate + UDP + H(+). The chain is Probable alpha,alpha-trehalose-phosphate synthase [UDP-forming] 7 (TPS7) from Arabidopsis thaliana (Mouse-ear cress).